The primary structure comprises 137 residues: Putative pre-16S rRNA nuclease (137 aa).

It belongs to the YqgF nuclease family.

It localises to the cytoplasm. In terms of biological role, could be a nuclease involved in processing of the 5'-end of pre-16S rRNA. The sequence is that of Putative pre-16S rRNA nuclease from Anaeromyxobacter sp. (strain Fw109-5).